We begin with the raw amino-acid sequence, 455 residues long: MGKLFGTDGVRGIVNKELTPELVLKLSKAIGTFFGKNSKILVGRDVRAGGDMLVKIVEGGLLSVGVEVYDGGMAPTPALQYAVKTLGYDGGVVITASHNPAPYNGIKVVDKDGIEIRREKENEIEDLFFTERFNTIEWSSLTTEVKREDRVISTYVNGILSHVDIEKIKKKNYKVLIDPANSVGALSTPLVARALGCKIYTINGNLDPLFSARQPEPTFDSLKETAEVVKTLKVDLGVAHDGDADRAIFIDSEGRVQWGDRSGTLLSYWASVKNPKAIKKIVTAVSSSSLVEEYLSKYNIQVDWTKVGSVDIAHKVADENALAGFEENGGFMYPPHQYVRDGAMSFALMLELLANENVSSAELFDRLPKYYLVKTKVDLKPGLMVEEIYKKILEVYSTSSVKAITIDGVKIIGKDFWFLVRKSGTEPIIRIMAEAKDENVANNLVNELKKIVEGK.

The Phosphoserine intermediate role is filled by Ser97. Residues Ser97, Asp241, Asp243, and Asp245 each coordinate Mg(2+). Phosphoserine is present on Ser97.

Belongs to the phosphohexose mutase family. The cofactor is Mg(2+). Post-translationally, activated by phosphorylation.

It catalyses the reaction alpha-D-glucosamine 1-phosphate = D-glucosamine 6-phosphate. The catalysed reaction is D-galactosamine 6-phosphate = alpha-D-galactosamine 1-phosphate. Functionally, involved in the synthesis of UDP-N-acetylglucosamine (UDP-GlcNAc) and UDP-N-acetylgalactosamine (UDP-GalNAc). Catalyzes the conversion of glucosamine-6-phosphate to glucosamine-1-phosphate and of galactosamine-6-phosphate to galactosamine-1-phosphate. The polypeptide is Phosphoglucosamine/phosphogalactosamine mutase (Sulfurisphaera tokodaii (strain DSM 16993 / JCM 10545 / NBRC 100140 / 7) (Sulfolobus tokodaii)).